The sequence spans 193 residues: Ribosome hibernation promotion factor (193 aa).

Belongs to the HPF/YfiA ribosome-associated protein family. Long HPF subfamily. In terms of assembly, interacts with 100S ribosomes.

Its subcellular location is the cytoplasm. In terms of biological role, might modulate either transcription and/or translation. Its function is as follows. Required for dimerization of active 70S ribosomes into 100S ribosomes in stationary phase; 100S ribosomes are translationally inactive and sometimes present during exponential growth. In Picosynechococcus sp. (strain ATCC 27264 / PCC 7002 / PR-6) (Agmenellum quadruplicatum), this protein is Ribosome hibernation promotion factor.